The sequence spans 299 residues: Recombination-associated protein RdgC (299 aa).

It belongs to the RdgC family.

It is found in the cytoplasm. Its subcellular location is the nucleoid. Functionally, may be involved in recombination. The protein is Recombination-associated protein RdgC of Laribacter hongkongensis (strain HLHK9).